The following is a 199-amino-acid chain: dTTP/UTP pyrophosphatase (199 aa).

The active-site Proton acceptor is the aspartate 75.

This sequence belongs to the Maf family. YhdE subfamily. It depends on a divalent metal cation as a cofactor.

The protein localises to the cytoplasm. It catalyses the reaction dTTP + H2O = dTMP + diphosphate + H(+). It carries out the reaction UTP + H2O = UMP + diphosphate + H(+). In terms of biological role, nucleoside triphosphate pyrophosphatase that hydrolyzes dTTP and UTP. May have a dual role in cell division arrest and in preventing the incorporation of modified nucleotides into cellular nucleic acids. This Methylobacillus flagellatus (strain ATCC 51484 / DSM 6875 / VKM B-1610 / KT) protein is dTTP/UTP pyrophosphatase.